A 411-amino-acid chain; its full sequence is Pyridinium-3,5-bisthiocarboxylic acid mononucleotide nickel insertion protein (411 aa).

It belongs to the LarC family.

The enzyme catalyses Ni(II)-pyridinium-3,5-bisthiocarboxylate mononucleotide = pyridinium-3,5-bisthiocarboxylate mononucleotide + Ni(2+). Its function is as follows. Involved in the biosynthesis of a nickel-pincer cofactor ((SCS)Ni(II) pincer complex). Binds Ni(2+), and functions in nickel delivery to pyridinium-3,5-bisthiocarboxylic acid mononucleotide (P2TMN), to form the mature cofactor. Is thus probably required for the activation of nickel-pincer cofactor-dependent enzymes. The polypeptide is Pyridinium-3,5-bisthiocarboxylic acid mononucleotide nickel insertion protein (Geobacillus kaustophilus (strain HTA426)).